We begin with the raw amino-acid sequence, 472 residues long: Divalent metal cation transporter MntH (472 aa).

11 consecutive transmembrane segments (helical) span residues 59–79 (LLAF…PGNW), 92–112 (MLLS…ALAA), 136–156 (LALW…EVIG), 167–187 (VPII…LLLM), 196–216 (AFVI…IVLA), 233–253 (VVAD…TVMP), 288–308 (LALM…AAVF), 325–345 (LLAP…ALLA), 377–397 (VLTR…YGEQ), 402–422 (LLLL…IPLL), and 439–459 (WLMV…VKLL).

Belongs to the NRAMP family.

It localises to the cell inner membrane. Its function is as follows. H(+)-stimulated, divalent metal cation uptake system. This is Divalent metal cation transporter MntH from Xylella fastidiosa (strain 9a5c).